Here is a 475-residue protein sequence, read N- to C-terminus: Ribulose bisphosphate carboxylase large chain (475 aa).

Residues 1–2 (MS) constitute a propeptide that is removed on maturation. P3 carries the post-translational modification N-acetylproline. K14 is subject to N6,N6,N6-trimethyllysine. Positions 123 and 173 each coordinate substrate. The active-site Proton acceptor is the K175. K177 contributes to the substrate binding site. Residues K201, D203, and E204 each contribute to the Mg(2+) site. An N6-carboxylysine modification is found at K201. Catalysis depends on H294, which acts as the Proton acceptor. The substrate site is built by R295, H327, and S379.

Belongs to the RuBisCO large chain family. Type I subfamily. Heterohexadecamer of 8 large chains and 8 small chains; disulfide-linked. The disulfide link is formed within the large subunit homodimers. The cofactor is Mg(2+). In terms of processing, the disulfide bond which can form in the large chain dimeric partners within the hexadecamer appears to be associated with oxidative stress and protein turnover.

It is found in the plastid. Its subcellular location is the chloroplast. The catalysed reaction is 2 (2R)-3-phosphoglycerate + 2 H(+) = D-ribulose 1,5-bisphosphate + CO2 + H2O. It catalyses the reaction D-ribulose 1,5-bisphosphate + O2 = 2-phosphoglycolate + (2R)-3-phosphoglycerate + 2 H(+). In terms of biological role, ruBisCO catalyzes two reactions: the carboxylation of D-ribulose 1,5-bisphosphate, the primary event in carbon dioxide fixation, as well as the oxidative fragmentation of the pentose substrate in the photorespiration process. Both reactions occur simultaneously and in competition at the same active site. This is Ribulose bisphosphate carboxylase large chain from Pelargonium hortorum (Common geranium).